The following is a 434-amino-acid chain: Histidine--tRNA ligase (434 aa).

The segment at 412–434 (DQTTVPVEAFPGDHDAPTYEDVV) is disordered.

It belongs to the class-II aminoacyl-tRNA synthetase family.

The protein resides in the cytoplasm. The enzyme catalyses tRNA(His) + L-histidine + ATP = L-histidyl-tRNA(His) + AMP + diphosphate + H(+). The protein is Histidine--tRNA ligase of Haloquadratum walsbyi (strain DSM 16790 / HBSQ001).